The sequence spans 421 residues: Serine hydroxymethyltransferase (421 aa).

(6S)-5,6,7,8-tetrahydrofolate-binding positions include Leu-121 and 125–127 (GHL). Lys-230 carries the post-translational modification N6-(pyridoxal phosphate)lysine. (6S)-5,6,7,8-tetrahydrofolate-binding positions include Glu-246 and 354 to 356 (SPF).

Belongs to the SHMT family. In terms of assembly, homodimer. Requires pyridoxal 5'-phosphate as cofactor.

The protein resides in the cytoplasm. It carries out the reaction (6R)-5,10-methylene-5,6,7,8-tetrahydrofolate + glycine + H2O = (6S)-5,6,7,8-tetrahydrofolate + L-serine. The protein operates within one-carbon metabolism; tetrahydrofolate interconversion. It participates in amino-acid biosynthesis; glycine biosynthesis; glycine from L-serine: step 1/1. Its function is as follows. Catalyzes the reversible interconversion of serine and glycine with tetrahydrofolate (THF) serving as the one-carbon carrier. This reaction serves as the major source of one-carbon groups required for the biosynthesis of purines, thymidylate, methionine, and other important biomolecules. Also exhibits THF-independent aldolase activity toward beta-hydroxyamino acids, producing glycine and aldehydes, via a retro-aldol mechanism. The sequence is that of Serine hydroxymethyltransferase from Rickettsia felis (strain ATCC VR-1525 / URRWXCal2) (Rickettsia azadi).